We begin with the raw amino-acid sequence, 728 residues long: Histone demethylase JHD2 (728 aa).

Residues Ile-4–Pro-47 enclose the JmjN domain. A PHD-type zinc finger spans residues Asp-235–Gly-285. A JmjC domain is found at Lys-381–Lys-549. Fe cation contacts are provided by His-427, Asp-430, and His-517.

This sequence belongs to the JARID1 histone demethylase family. Requires Fe(2+) as cofactor.

It is found in the nucleus. It carries out the reaction N(6),N(6),N(6)-trimethyl-L-lysyl(4)-[histone H3] + 3 2-oxoglutarate + 3 O2 = L-lysyl(4)-[histone H3] + 3 formaldehyde + 3 succinate + 3 CO2. Histone demethylase that demethylates 'Lys-4' of histone H3, thereby playing a central role in histone code. Demethylates trimethylated H3 'Lys-4'. In Saccharomyces cerevisiae (strain ATCC 204508 / S288c) (Baker's yeast), this protein is Histone demethylase JHD2 (JHD2).